A 610-amino-acid chain; its full sequence is Aspartate--tRNA(Asp/Asn) ligase (610 aa).

Residue Glu-177 coordinates L-aspartate. The aspartate stretch occupies residues 201–204 (QLFK). Residue Arg-223 coordinates L-aspartate. ATP is bound by residues 223–225 (RDE) and Gln-232. L-aspartate is bound at residue His-461. Glu-499 contacts ATP. Arg-506 is an L-aspartate binding site. An ATP-binding site is contributed by 551–554 (GVDR).

It belongs to the class-II aminoacyl-tRNA synthetase family. Type 1 subfamily. In terms of assembly, homodimer.

Its subcellular location is the cytoplasm. The catalysed reaction is tRNA(Asx) + L-aspartate + ATP = L-aspartyl-tRNA(Asx) + AMP + diphosphate. In terms of biological role, aspartyl-tRNA synthetase with relaxed tRNA specificity since it is able to aspartylate not only its cognate tRNA(Asp) but also tRNA(Asn). Reaction proceeds in two steps: L-aspartate is first activated by ATP to form Asp-AMP and then transferred to the acceptor end of tRNA(Asp/Asn). The chain is Aspartate--tRNA(Asp/Asn) ligase from Parasynechococcus marenigrum (strain WH8102).